We begin with the raw amino-acid sequence, 491 residues long: MKRMVSWSFHKLKTMKHLLLLLLCVFLVKSQGVNDNEEGFFSARGHRPLDKKREEAPSLRPAPPPISGGGYRARPAKAAATQKKVERKAPDAGGCLHADPDLGVLCPTGCQLQEALLQQERPIRNSVDELNNNVEAVSQTSSSSFQYMYLLKDLWQKRQKQVKDNENVVNEYSSELEKHQLYIDETVNSNIPTNLRVLRSILENLRSKIQKLESDVSAQMEYCRTPCTVSCNIPVVSGKECEEIIRKGGETSEMYLIQPDSSVKPYRVYCDMNTENGGWTVIQNRQDGSVDFGRKWDPYKQGFGNVATNTDGKNYCGLPGEYWLGNDKISQLTRMGPTELLIEMEDWKGDKVKAHYGGFTVQNEANKYQISVNKYRGTAGNALMDGASQLMGENRTMTIHNGMFFSTYDRDNDGWLTSDPRKQCSKEDGGGWWYNRCHAANPNGRYYWGGQYTWDMAKHGTDDGVVWMNWKGSWYSMRKMSMKIRPFFPQQ.

The N-terminal stretch at Met1–Ser30 is a signal peptide. Gln31 bears the Pyrrolidone carboxylic acid mark. The disordered stretch occupies residues Arg44–Pro75. A beta-chain polymerization, binding distal domain of another fibrin region spans residues Gly45–Arg47. Residues Arg47–Pro57 show a composition bias toward basic and acidic residues. The stretch at Lys157–Tyr222 forms a coiled coil. Intrachain disulfides connect Cys231/Cys316 and Cys241/Cys270. In terms of domain architecture, Fibrinogen C-terminal spans Asn232 to Phe488. The N-linked (GlcNAc...) asparagine glycan is linked to Asn394. An intrachain disulfide couples Cys424 to Cys437.

In terms of assembly, heterohexamer; disulfide linked. Contains 2 sets of 3 non-identical chains (alpha, beta and gamma). The 2 heterotrimers are in head to head conformation with the N-termini in a small central domain. In terms of processing, conversion of fibrinogen to fibrin is triggered by thrombin, which cleaves fibrinopeptides A and B from alpha and beta chains, and thus exposes the N-terminal polymerization sites responsible for the formation of the soft clot. The soft clot is converted into the hard clot by factor XIIIA which catalyzes the epsilon-(gamma-glutamyl)lysine cross-linking between gamma chains (stronger) and between alpha chains (weaker) of different monomers. Detected in blood plasma (at protein level).

It is found in the secreted. Cleaved by the protease thrombin to yield monomers which, together with fibrinogen alpha (FGA) and fibrinogen gamma (FGG), polymerize to form an insoluble fibrin matrix. Fibrin has a major function in hemostasis as one of the primary components of blood clots. In addition, functions during the early stages of wound repair to stabilize the lesion and guide cell migration during re-epithelialization. Was originally thought to be essential for platelet aggregation, based on in vitro studies using anticoagulated blood. However subsequent studies have shown that it is not absolutely required for thrombus formation in vivo. Enhances expression of SELP in activated platelets. Maternal fibrinogen is essential for successful pregnancy. Fibrin deposition is also associated with infection, where it protects against IFNG-mediated hemorrhage. May also facilitate the antibacterial immune response via both innate and T-cell mediated pathways. This Homo sapiens (Human) protein is Fibrinogen beta chain (FGB).